The following is a 269-amino-acid chain: 4-hydroxy-tetrahydrodipicolinate reductase (269 aa).

Residues 8 to 13 (GAAGRM) and Glu34 each bind NAD(+). Residue Arg35 participates in NADP(+) binding. Residues 98 to 100 (GTT) and 122 to 125 (APNY) contribute to the NAD(+) site. The active-site Proton donor/acceptor is the His155. Residue His156 participates in (S)-2,3,4,5-tetrahydrodipicolinate binding. The active-site Proton donor is the Lys159. Residue 165-166 (GT) participates in (S)-2,3,4,5-tetrahydrodipicolinate binding.

This sequence belongs to the DapB family.

It is found in the cytoplasm. The enzyme catalyses (S)-2,3,4,5-tetrahydrodipicolinate + NAD(+) + H2O = (2S,4S)-4-hydroxy-2,3,4,5-tetrahydrodipicolinate + NADH + H(+). The catalysed reaction is (S)-2,3,4,5-tetrahydrodipicolinate + NADP(+) + H2O = (2S,4S)-4-hydroxy-2,3,4,5-tetrahydrodipicolinate + NADPH + H(+). It functions in the pathway amino-acid biosynthesis; L-lysine biosynthesis via DAP pathway; (S)-tetrahydrodipicolinate from L-aspartate: step 4/4. Catalyzes the conversion of 4-hydroxy-tetrahydrodipicolinate (HTPA) to tetrahydrodipicolinate. This is 4-hydroxy-tetrahydrodipicolinate reductase from Vibrio cholerae serotype O1 (strain ATCC 39315 / El Tor Inaba N16961).